The chain runs to 271 residues: Protein phosphatase 1 regulatory subunit 3B-B (271 aa).

The PP1-binding motif signature appears at 56 to 59 (RVSF). Residues 119-227 (RNRLKADSVC…SNKGLNYRIV (109 aa)) enclose the CBM21 domain.

As to quaternary structure, interacts with glycogen, PPP1CC catalytic subunit of PP1 and PYGL. Associates with glycogen particles. Forms complexes with debranching enzyme, glycogen phosphorylase, glycogen synthase and phosphorylase kinase which is necessary for its regulation of PP1 activity.

Its function is as follows. Acts as a glycogen-targeting subunit for phosphatase PP1. Facilitates interaction of the PP1 with enzymes of the glycogen metabolism and regulates its activity. Suppresses the rate at which PP1 dephosphorylates (inactivates) glycogen phosphorylase and enhances the rate at which it activates glycogen synthase and therefore limits glycogen breakdown. In Xenopus laevis (African clawed frog), this protein is Protein phosphatase 1 regulatory subunit 3B-B (ppp1r3b-b).